The chain runs to 156 residues: Small ribosomal subunit protein uS7 (156 aa).

This sequence belongs to the universal ribosomal protein uS7 family. Part of the 30S ribosomal subunit. Contacts proteins S9 and S11.

One of the primary rRNA binding proteins, it binds directly to 16S rRNA where it nucleates assembly of the head domain of the 30S subunit. Is located at the subunit interface close to the decoding center, probably blocks exit of the E-site tRNA. In Rhodopseudomonas palustris (strain BisA53), this protein is Small ribosomal subunit protein uS7.